The following is a 511-amino-acid chain: Coatomer subunit delta (511 aa).

Positions 168 to 177 (QARRDAERQG) are enriched in basic and acidic residues. The tract at residues 168-188 (QARRDAERQGKKAPGFGGFGS) is disordered. A Phosphoserine modification is found at serine 223. N6-acetyllysine is present on residues lysine 233 and lysine 241. Residue serine 244 is modified to Phosphoserine. The MHD domain occupies 271 to 511 (MESVHMKIEE…TFLVDKYEIL (241 aa)). N6-acetyllysine is present on residues lysine 309 and lysine 351. Residue serine 493 is modified to Phosphoserine.

The protein belongs to the adaptor complexes medium subunit family. Delta-COP subfamily. Oligomeric complex that consists of at least the alpha, beta, beta', gamma, delta, epsilon and zeta subunits.

The protein localises to the cytoplasm. It is found in the golgi apparatus membrane. Its subcellular location is the cytoplasmic vesicle. The protein resides in the COPI-coated vesicle membrane. Its function is as follows. The coatomer is a cytosolic protein complex that binds to dilysine motifs and reversibly associates with Golgi non-clathrin-coated vesicles, which further mediate biosynthetic protein transport from the ER, via the Golgi up to the trans Golgi network. Coatomer complex is required for budding from Golgi membranes, and is essential for the retrograde Golgi-to-ER transport of dilysine-tagged proteins. In mammals, the coatomer can only be recruited by membranes associated to ADP-ribosylation factors (ARFs), which are small GTP-binding proteins; the complex also influences the Golgi structural integrity, as well as the processing, activity, and endocytic recycling of LDL receptors. This chain is Coatomer subunit delta (Arcn1), found in Rattus norvegicus (Rat).